Here is a 220-residue protein sequence, read N- to C-terminus: Eukaryotic translation initiation factor 3 subunit B (220 aa).

Residues 1–94 are sufficient for interaction with HCR1 and TIF32; it reads MPEPIAFDES…LIIELDSAAA (94 aa). The tract at residues 1-220 is sufficient for interaction with PIC8; the sequence is MPEPIAFDES…GVQAWGGERI (220 aa). The 84-residue stretch at 37–120 folds into the RRM domain; the sequence is HFVICDGAPI…HRLAVNKLPD (84 aa).

The protein belongs to the eIF-3 subunit B family. In terms of assembly, component of the eukaryotic translation initiation factor 3 (eIF-3) complex.

The protein resides in the cytoplasm. RNA-binding component of the eukaryotic translation initiation factor 3 (eIF-3) complex, which is involved in protein synthesis of a specialized repertoire of mRNAs and, together with other initiation factors, stimulates binding of mRNA and methionyl-tRNAi to the 40S ribosome. The eIF-3 complex specifically targets and initiates translation of a subset of mRNAs involved in cell proliferation. This chain is Eukaryotic translation initiation factor 3 subunit B (TIF32), found in Pichia angusta (Yeast).